A 397-amino-acid polypeptide reads, in one-letter code: Myb family transcription factor PHL4 (397 aa).

Positions 1–27 (MIPNDDDDANSMKNYPLNDDDANSMKN) are disordered. The HTH myb-type domain maps to 228-288 (AAAKGRMRWT…HLQKYRTAKY (61 aa)). The H-T-H motif DNA-binding region spans 259–284 (PKGVLKHMKVEGLTIFHVKSHLQKYR). Residues 319–339 (TETLRIQMEHQKKLHEQLESL) are coiled coil. Residues 332-337 (LHEQLE) carry the LHEQLE motif. The disordered stretch occupies residues 359-397 (KQNMGFGGPEQGEKTSAKTPENGSEESESPRPKRPRNEE). A compositionally biased stretch (basic and acidic residues) spans 386–397 (ESPRPKRPRNEE). Residue serine 387 is modified to Phosphoserine.

This sequence belongs to the MYB-CC family.

It is found in the nucleus. Transcription factor involved in male gametophyte development. This Arabidopsis thaliana (Mouse-ear cress) protein is Myb family transcription factor PHL4.